A 240-amino-acid polypeptide reads, in one-letter code: Transcriptional regulatory protein ChvI (240 aa).

One can recognise a Response regulatory domain in the interval 3 to 116 (TIALVDDDRN…LLVERVKAIL (114 aa)). The Mg(2+) site is built by D8, D9, and D52. At D52 the chain carries 4-aspartylphosphate. The segment at residues 139 to 238 (SRSLERGQLV…LYGVGYRFRE (100 aa)) is a DNA-binding region (ompR/PhoB-type).

The cofactor is Mg(2+). Phosphorylated by ChvG.

The protein resides in the cytoplasm. It functions in the pathway glycan metabolism; exopolysaccharide biosynthesis. Member of a two-component regulatory system ChvG(ExoS)/ChvI involved in regulating the production of succinoglycan. The sequence is that of Transcriptional regulatory protein ChvI (chvI) from Rhizobium meliloti (strain 1021) (Ensifer meliloti).